Here is a 306-residue protein sequence, read N- to C-terminus: Non-specific ribonucleoside hydrolase RihC (306 aa).

Residue H235 is part of the active site.

This sequence belongs to the IUNH family. RihC subfamily.

In terms of biological role, hydrolyzes both purine and pyrimidine ribonucleosides with a broad-substrate specificity. The chain is Non-specific ribonucleoside hydrolase RihC from Salmonella agona (strain SL483).